Reading from the N-terminus, the 226-residue chain is Putative ABC transporter ATP-binding protein BQ02700 (226 aa).

The 222-residue stretch at 4 to 225 (IKFDKVTQVF…VAIKEYIRRM (222 aa)) folds into the ABC transporter domain. 35–42 (GANGSGKS) provides a ligand contact to ATP.

Belongs to the ABC transporter superfamily.

It is found in the cell inner membrane. In terms of biological role, probably part of an ABC transporter complex. Responsible for energy coupling to the transport system. This chain is Putative ABC transporter ATP-binding protein BQ02700, found in Bartonella quintana (strain Toulouse) (Rochalimaea quintana).